An 84-amino-acid chain; its full sequence is Large ribosomal subunit protein bL27 (84 aa).

Residues 1 to 21 are disordered; sequence MAHKKGGGSTKNGRDSNPQYL.

The protein belongs to the bacterial ribosomal protein bL27 family.

This is Large ribosomal subunit protein bL27 from Chloroherpeton thalassium (strain ATCC 35110 / GB-78).